A 213-amino-acid polypeptide reads, in one-letter code: Uridine kinase (213 aa).

15–22 serves as a coordination point for ATP; it reads GASASGKS.

Belongs to the uridine kinase family.

The protein resides in the cytoplasm. It catalyses the reaction uridine + ATP = UMP + ADP + H(+). The catalysed reaction is cytidine + ATP = CMP + ADP + H(+). The protein operates within pyrimidine metabolism; CTP biosynthesis via salvage pathway; CTP from cytidine: step 1/3. Its pathway is pyrimidine metabolism; UMP biosynthesis via salvage pathway; UMP from uridine: step 1/1. In Escherichia fergusonii (strain ATCC 35469 / DSM 13698 / CCUG 18766 / IAM 14443 / JCM 21226 / LMG 7866 / NBRC 102419 / NCTC 12128 / CDC 0568-73), this protein is Uridine kinase.